The sequence spans 138 residues: Ribulose bisphosphate carboxylase small subunit (138 aa).

It belongs to the RuBisCO small chain family. Heterohexadecamer of 8 large and 8 small subunits.

It is found in the plastid. Its subcellular location is the chloroplast. Functionally, ruBisCO catalyzes two reactions: the carboxylation of D-ribulose 1,5-bisphosphate, the primary event in carbon dioxide fixation, as well as the oxidative fragmentation of the pentose substrate in the photorespiration process. Both reactions occur simultaneously and in competition at the same active site. Although the small subunit is not catalytic it is essential for maximal activity. The sequence is that of Ribulose bisphosphate carboxylase small subunit from Pyropia yezoensis (Susabi-nori).